Reading from the N-terminus, the 430-residue chain is Delta-aminolevulinic acid dehydratase 1, chloroplastic (430 aa).

The N-terminal 52 residues, 1–52 (MATTPIFNASCSFPSTRGIDCKSYIGLRSNVSKVSVASSRIATSQRRNLVVR), are a transit peptide targeting the chloroplast. The segment covering 82–91 (EAPPVPPKPA) has biased composition (pro residues). Positions 82 to 101 (EAPPVPPKPAAPVGTPIIKP) are disordered. Lysine 298 serves as the catalytic Schiff-base intermediate with substrate. Residues arginine 308 and lysine 320 each coordinate 5-aminolevulinate. Glutamate 336 lines the Mg(2+) pocket. Lysine 351 serves as the catalytic Schiff-base intermediate with substrate. Positions 377 and 416 each coordinate 5-aminolevulinate.

This sequence belongs to the ALAD family. Homooctamer. The cofactor is Mg(2+). In terms of tissue distribution, highly expressed in cotyledons during dark-to-light transition.

Its subcellular location is the plastid. It localises to the chloroplast. It carries out the reaction 2 5-aminolevulinate = porphobilinogen + 2 H2O + H(+). Its pathway is porphyrin-containing compound metabolism; protoporphyrin-IX biosynthesis; coproporphyrinogen-III from 5-aminolevulinate: step 1/4. The protein operates within porphyrin-containing compound metabolism; chlorophyll biosynthesis. In terms of biological role, catalyzes an early step in the biosynthesis of tetrapyrroles. Binds two molecules of 5-aminolevulinate per subunit, each at a distinct site, and catalyzes their condensation to form porphobilinogen. The protein is Delta-aminolevulinic acid dehydratase 1, chloroplastic (HEMB1) of Arabidopsis thaliana (Mouse-ear cress).